The following is a 397-amino-acid chain: Elongation factor Tu (397 aa).

One can recognise a tr-type G domain in the interval 10-206 (KPHVNIGTIG…HIDTYIPEPT (197 aa)). The interval 19-26 (GHVDHGKT) is G1. Position 19-26 (19-26 (GHVDHGKT)) interacts with GTP. Thr-26 lines the Mg(2+) pocket. The segment at 61–65 (GITIS) is G2. Residues 82 to 85 (DCPG) form a G3 region. Residues 82-86 (DCPGH) and 137-140 (NKCD) contribute to the GTP site. Residues 137 to 140 (NKCD) are G4. Positions 175–177 (SAL) are G5.

Belongs to the TRAFAC class translation factor GTPase superfamily. Classic translation factor GTPase family. EF-Tu/EF-1A subfamily. Monomer.

The protein resides in the cytoplasm. It carries out the reaction GTP + H2O = GDP + phosphate + H(+). GTP hydrolase that promotes the GTP-dependent binding of aminoacyl-tRNA to the A-site of ribosomes during protein biosynthesis. This is Elongation factor Tu from Alkaliphilus oremlandii (strain OhILAs) (Clostridium oremlandii (strain OhILAs)).